Reading from the N-terminus, the 160-residue chain is uncharacterized protein (160 aa).

An N-terminal signal peptide occupies residues 1 to 27 (MVIGRKAGIIIYVMHALLLLLLSFTFA).

This is an uncharacterized protein from Aquifex aeolicus (strain VF5).